The chain runs to 151 residues: Transcriptional repressor NrdR (151 aa).

A zinc finger spans residues cysteine 3–cysteine 34. The ATP-cone domain maps to leucine 49–threonine 139.

It belongs to the NrdR family. It depends on Zn(2+) as a cofactor.

Its function is as follows. Negatively regulates transcription of bacterial ribonucleotide reductase nrd genes and operons by binding to NrdR-boxes. This chain is Transcriptional repressor NrdR, found in Clostridium kluyveri (strain NBRC 12016).